A 337-amino-acid polypeptide reads, in one-letter code: Glyceraldehyde-3-phosphate dehydrogenase 3, cytosolic (337 aa).

The binding to NAD stretch occupies residues 1-151 (MAKIKIGING…YKSDINIVSN (151 aa)). Residues 13–14 (RI), D35, and R82 each bind NAD(+). Positions 152-337 (ASCTTNCLAP…DLIRHMNSTK (186 aa)) are catalytic. D-glyceraldehyde 3-phosphate-binding positions include 153–155 (SCT), T184, 213–214 (TG), and R236. C154 functions as the Nucleophile in the catalytic mechanism. N318 lines the NAD(+) pocket.

The protein belongs to the glyceraldehyde-3-phosphate dehydrogenase family. In terms of assembly, homotetramer.

The protein localises to the cytoplasm. The enzyme catalyses D-glyceraldehyde 3-phosphate + phosphate + NAD(+) = (2R)-3-phospho-glyceroyl phosphate + NADH + H(+). Its pathway is carbohydrate degradation; glycolysis; pyruvate from D-glyceraldehyde 3-phosphate: step 1/5. Key enzyme in glycolysis that catalyzes the first step of the pathway by converting D-glyceraldehyde 3-phosphate (G3P) into 3-phospho-D-glyceroyl phosphate. Essential for the maintenance of cellular ATP levels and carbohydrate metabolism. The polypeptide is Glyceraldehyde-3-phosphate dehydrogenase 3, cytosolic (GAPC3) (Zea mays (Maize)).